The following is a 616-amino-acid chain: Kelch-like protein 36 (616 aa).

One can recognise a BTB domain in the interval 46 to 113 (CDVVLVADEQ…LYGGELVLDG (68 aa)). Residues 148-250 (YLYLQELASI…PKNDLLHRVK (103 aa)) form the BACK domain. Kelch repeat units follow at residues 296-345 (CLLF…VLGG), 346-397 (FIFI…SIED), 398-444 (MLVA…IYKD), 446-493 (VYIS…SLGD), 494-546 (SIYS…VWEG), and 547-595 (RIYI…VCAL).

In terms of assembly, interacts with CUL3.

The protein operates within protein modification; protein ubiquitination. Functionally, probable substrate-specific adapter of an E3 ubiquitin-protein ligase complex which mediates the ubiquitination and subsequent proteasomal degradation of target proteins. This chain is Kelch-like protein 36 (KLHL36), found in Bos taurus (Bovine).